Here is a 111-residue protein sequence, read N- to C-terminus: X antigen family member 3 (111 aa).

The disordered stretch occupies residues 1–111 (MIWRGRSTYR…PEGGDRQPQV (111 aa)). Residues 29–40 (PGDEEPQQEEPP) are compositionally biased toward acidic residues. Positions 97 to 111 (EQFKMPEGGDRQPQV) are enriched in basic and acidic residues.

It belongs to the GAGE family.

The polypeptide is X antigen family member 3 (XAGE3) (Homo sapiens (Human)).